The sequence spans 461 residues: Thyroid hormone receptor beta (461 aa).

The disordered stretch occupies residues 1-24 (MTPNSMTENRLPAWDKQKPHPDRG). Residues 1-106 (MTPNSMTENR…IPSYLDKDEL (106 aa)) form a modulating region. Residues 13-24 (AWDKQKPHPDRG) show a composition bias toward basic and acidic residues. Zn(2+)-binding residues include Cys107, Cys110, Cys124, Cys127, Cys145, Cys151, Cys161, and Cys164. 2 consecutive NR C4-type zinc fingers follow at residues 107–127 (CVVC…CEGC) and 145–169 (CKYE…FKKC). Residues 107 to 181 (CVVCGDKATG…VGMATDLVLD (75 aa)) constitute a DNA-binding region (nuclear receptor). The 245-residue stretch at 217-461 (EEWELIKTVT…PPLFLEVFED (245 aa)) folds into the NR LBD domain. An interaction with NR2F6 region spans residues 244–461 (KFLPEDIGQA…PPLFLEVFED (218 aa)). 3,3',5-triiodo-L-thyronine contacts are provided by Arg282, Asn331, and His435. Residues Arg282, Asn331, and His435 each contribute to the L-thyroxine site.

This sequence belongs to the nuclear hormone receptor family. NR1 subfamily. As to quaternary structure, binds DNA as a dimer; homodimer and heterodimer with RXRA. Interacts with the coactivators NCOA1/SRC1, NCOA2/GRIP1, NCOA7 and MED1/TRAP220 in a ligand-inducible manner. Interacts with the corepressor NCOR1 in absence of ligand. Interacts with C1D. Interacts with NR2F6; the interaction impairs the binding of the THRB homodimer and THRB:RXRB heterodimer to T3 response elements. Interacts with PRMT2 and THRSP. Interacts with TACC1; this interaction is decreased in the presence of thyroid hormone T3.

It localises to the nucleus. In terms of biological role, nuclear hormone receptor that can act as a repressor or activator of transcription. High affinity receptor for thyroid hormones, including triiodothyronine and thyroxine. This is Thyroid hormone receptor beta (Thrb) from Rattus norvegicus (Rat).